The following is a 154-amino-acid chain: 6,7-dimethyl-8-ribityllumazine synthase (154 aa).

5-amino-6-(D-ribitylamino)uracil is bound by residues F22, 56–58 (AFE), and 80–82 (TVI). 85 to 86 (ST) contacts (2S)-2-hydroxy-3-oxobutyl phosphate. Catalysis depends on H88, which acts as the Proton donor. F113 is a binding site for 5-amino-6-(D-ribitylamino)uracil. (2S)-2-hydroxy-3-oxobutyl phosphate is bound at residue R127.

This sequence belongs to the DMRL synthase family.

The enzyme catalyses (2S)-2-hydroxy-3-oxobutyl phosphate + 5-amino-6-(D-ribitylamino)uracil = 6,7-dimethyl-8-(1-D-ribityl)lumazine + phosphate + 2 H2O + H(+). Its pathway is cofactor biosynthesis; riboflavin biosynthesis; riboflavin from 2-hydroxy-3-oxobutyl phosphate and 5-amino-6-(D-ribitylamino)uracil: step 1/2. Catalyzes the formation of 6,7-dimethyl-8-ribityllumazine by condensation of 5-amino-6-(D-ribitylamino)uracil with 3,4-dihydroxy-2-butanone 4-phosphate. This is the penultimate step in the biosynthesis of riboflavin. The protein is 6,7-dimethyl-8-ribityllumazine synthase of Lactococcus lactis subsp. cremoris (strain MG1363).